The following is a 376-amino-acid chain: Na(+)/H(+) antiporter NhaA (376 aa).

Helical transmembrane passes span 8–28 (FLAT…AAML), 49–69 (LSLL…LVGL), 87–107 (ILPC…YLAF), 117–137 (GWAI…ALLG), 140–160 (APAS…MGAV), 162–182 (IIAL…AIVI), 209–229 (LAVL…ALAI), 248–268 (PWVA…VSFA), 270–290 (IGAE…LFLG), 321–341 (GVAL…GLAF), and 349–369 (EVKI…YALL).

It belongs to the NhaA Na(+)/H(+) (TC 2.A.33) antiporter family.

It is found in the cell inner membrane. The catalysed reaction is Na(+)(in) + 2 H(+)(out) = Na(+)(out) + 2 H(+)(in). Na(+)/H(+) antiporter that extrudes sodium in exchange for external protons. This chain is Na(+)/H(+) antiporter NhaA, found in Rhizorhabdus wittichii (strain DSM 6014 / CCUG 31198 / JCM 15750 / NBRC 105917 / EY 4224 / RW1) (Sphingomonas wittichii).